A 320-amino-acid polypeptide reads, in one-letter code: L-lactate dehydrogenase A (320 aa).

Residues Arg88, Asn120, and Arg151 each contribute to the substrate site. Asn120 provides a ligand contact to NAD(+). The active-site Proton acceptor is His175.

The protein belongs to the LDH/MDH superfamily. LDH family. As to quaternary structure, homotetramer.

It localises to the cytoplasm. The catalysed reaction is (S)-lactate + NAD(+) = pyruvate + NADH + H(+). It functions in the pathway fermentation; pyruvate fermentation to lactate; (S)-lactate from pyruvate: step 1/1. Converts pyruvate to lactate. The sequence is that of L-lactate dehydrogenase A (LDHA) from Rhizopus oryzae (Mucormycosis agent).